The sequence spans 890 residues: DNA mismatch repair protein MutS (890 aa).

634-641 is a binding site for ATP; it reads GPNMGGKS.

Belongs to the DNA mismatch repair MutS family.

Its function is as follows. This protein is involved in the repair of mismatches in DNA. It is possible that it carries out the mismatch recognition step. This protein has a weak ATPase activity. The polypeptide is DNA mismatch repair protein MutS (Burkholderia pseudomallei (strain 1710b)).